A 368-amino-acid polypeptide reads, in one-letter code: Terpene cyclase penA (368 aa).

Helical transmembrane passes span 10 to 30 (IILA…NGFI), 81 to 101 (LSLY…ILLM), 118 to 138 (LTGL…LLAM), 192 to 212 (LFIA…GIAH), 233 to 253 (FALA…FLSI), and 334 to 354 (LATM…YWTA).

The protein belongs to the membrane-bound ascI terpene cyclase family.

The protein resides in the membrane. It participates in secondary metabolite biosynthesis. In terms of biological role, part of the gene cluster that mediates the biosynthesis of the indole diterpenes penitrems. The geranylgeranyl diphosphate (GGPP) synthase penG catalyzes the first step in penitrem biosynthesis via conversion of farnesyl pyrophosphate and isopentyl pyrophosphate into geranylgeranyl pyrophosphate (GGPP). Condensation of indole-3-glycerol phosphate with GGPP by the prenyl transferase penC then forms 3-geranylgeranylindole (3-GGI). Epoxidation by the FAD-dependent monooxygenase penM leads to a epoxidized-GGI that is substrate of the terpene cyclase penB for cyclization to yield paspaline. Paspaline is subsequently converted to 13-desoxypaxilline by the cytochrome P450 monooxygenase penP, the latter being then converted to paxilline by the cytochrome P450 monooxygenase penQ. Paxilline is converted to beta-paxitriol via C-10 ketoreduction by the short-chain dehydrogenase PC-15 which can be monoprenylated at the C-20 by the indole diterpene prenyltransferase penD. A two-step elimination (acetylation and elimination) process performed by the O-acetyltransferase PC-16 and the P.simplicissimum ptmI-ortholog not yet identified in P.crustosum, leads to the production of the prenylated form of penijanthine. The FAD-linked oxidoreductase ptmO then converts the prenylated form of penijanthine into PC-M5 which is in turn transformed into PC-M4 by the aromatic dimethylallyltransferase PC-22. A series of oxidation steps involving 4 cytochrome P450 monooxygenases (PC-21, PC-05, PC-23, PC-20) and a FAD-dependent monooxygenase (PC-14) are required for the transformation of PC-M4 to penitrems A and E. Synthesis of these final products is proposed to proceed via penitrems D and C (PC-21, PC-05, PC-14) and penitrems B and F (PC-21, PC-05, PC-14, PC-23). This chain is Terpene cyclase penA, found in Penicillium crustosum (Blue mold fungus).